We begin with the raw amino-acid sequence, 190 residues long: CASP-like protein 5A3 (190 aa).

Composition is skewed to low complexity over residues M1 to E12 and A20 to G31. A disordered region spans residues M1–G31. The Cytoplasmic portion of the chain corresponds to M1–P50. A helical transmembrane segment spans residues A51–A71. Residues S72–A81 lie on the Extracellular side of the membrane. A helical membrane pass occupies residues F82–V102. Topologically, residues D103 to D126 are cytoplasmic. A helical membrane pass occupies residues G127–I147. Residues G148–T164 are Extracellular-facing. The helical transmembrane segment at A165 to W185 threads the bilayer. At S186–R190 the chain is on the cytoplasmic side.

The protein belongs to the Casparian strip membrane proteins (CASP) family. In terms of assembly, homodimer and heterodimers.

It is found in the cell membrane. This Zea mays (Maize) protein is CASP-like protein 5A3.